Reading from the N-terminus, the 321-residue chain is MQNRKTYDDWVKKWITQSISVLIMIDIMTRTSIANAYPIFAQQAYENPREATGRIVCANCHLAKKPVEIEVPQSVLPDTVFEAVVKIPYDKQIKQVLANGKKGTLNVGAVLILPEGFELAPPDRIYPEIKEKIGDLYFQNYRPNQKNILIIGPVPGQKYSEIVFPILSPNPATNKAAHFLKYPIYVGGNRGRGQIYPDGSKSNNTVYNASATGKVSKIVRKEKGGYQITIDNPSDGRQVVDFVPPGPELLVSEGEFIKADQSLTNNPNVGGFGQENAEIVLQDPLRVQGLLLFLASVVLAQIFLVLKKKQFEKVQLVEMNF.

A signal peptide spans 1-35 (MQNRKTYDDWVKKWITQSISVLIMIDIMTRTSIAN). Heme-binding residues include Tyr-37, Cys-57, Cys-60, and His-61. A helical membrane pass occupies residues 287 to 307 (VQGLLLFLASVVLAQIFLVLK).

It belongs to the cytochrome f family. In terms of assembly, the 4 large subunits of the cytochrome b6-f complex are cytochrome b6, subunit IV (17 kDa polypeptide, petD), cytochrome f and the Rieske protein, while the 4 small subunits are PetG, PetL, PetM and PetN. The complex functions as a dimer. Heme is required as a cofactor.

The protein localises to the plastid. It is found in the chloroplast thylakoid membrane. In terms of biological role, component of the cytochrome b6-f complex, which mediates electron transfer between photosystem II (PSII) and photosystem I (PSI), cyclic electron flow around PSI, and state transitions. The sequence is that of Cytochrome f from Cryptomeria japonica (Japanese cedar).